We begin with the raw amino-acid sequence, 322 residues long: uncharacterized protein (322 aa).

Residues 34 to 286 (KFKQKIFKIP…QRLSKDKVPE (253 aa)) enclose the Radical SAM core domain. The [4Fe-4S] cluster site is built by C50, C58, and C61.

Belongs to the radical SAM superfamily. Requires [4Fe-4S] cluster as cofactor.

This is an uncharacterized protein from Methanocaldococcus jannaschii (strain ATCC 43067 / DSM 2661 / JAL-1 / JCM 10045 / NBRC 100440) (Methanococcus jannaschii).